The sequence spans 160 residues: Crossover junction endodeoxyribonuclease RuvC (160 aa).

Active-site residues include aspartate 7, glutamate 70, and aspartate 142. Residues aspartate 7, glutamate 70, and aspartate 142 each contribute to the Mg(2+) site.

It belongs to the RuvC family. As to quaternary structure, homodimer which binds Holliday junction (HJ) DNA. The HJ becomes 2-fold symmetrical on binding to RuvC with unstacked arms; it has a different conformation from HJ DNA in complex with RuvA. In the full resolvosome a probable DNA-RuvA(4)-RuvB(12)-RuvC(2) complex forms which resolves the HJ. Mg(2+) serves as cofactor.

The protein resides in the cytoplasm. It carries out the reaction Endonucleolytic cleavage at a junction such as a reciprocal single-stranded crossover between two homologous DNA duplexes (Holliday junction).. Its function is as follows. The RuvA-RuvB-RuvC complex processes Holliday junction (HJ) DNA during genetic recombination and DNA repair. Endonuclease that resolves HJ intermediates. Cleaves cruciform DNA by making single-stranded nicks across the HJ at symmetrical positions within the homologous arms, yielding a 5'-phosphate and a 3'-hydroxyl group; requires a central core of homology in the junction. The consensus cleavage sequence is 5'-(A/T)TT(C/G)-3'. Cleavage occurs on the 3'-side of the TT dinucleotide at the point of strand exchange. HJ branch migration catalyzed by RuvA-RuvB allows RuvC to scan DNA until it finds its consensus sequence, where it cleaves and resolves the cruciform DNA. In Ehrlichia ruminantium (strain Welgevonden), this protein is Crossover junction endodeoxyribonuclease RuvC.